The sequence spans 218 residues: Protein-methionine-sulfoxide reductase heme-binding subunit MsrQ (218 aa).

5 helical membrane passes run 14 to 34, 60 to 80, 86 to 106, 121 to 141, and 155 to 175; these read AVHAAVLAPIALLGWQFWQVW, LLLITLAITPLRQLTGQAVLI, LGLYTFFYASVHLTAYLWLDL, PYITVGFTAWLLLVPLAITST, and LHMLIYPIGLLAVLHFWWLVK.

Belongs to the MsrQ family. As to quaternary structure, heterodimer of a catalytic subunit (MsrP) and a heme-binding subunit (MsrQ). FMN serves as cofactor. The cofactor is heme b.

The protein resides in the cell inner membrane. Its function is as follows. Part of the MsrPQ system that repairs oxidized periplasmic proteins containing methionine sulfoxide residues (Met-O), using respiratory chain electrons. Thus protects these proteins from oxidative-stress damage caused by reactive species of oxygen and chlorine generated by the host defense mechanisms. MsrPQ is essential for the maintenance of envelope integrity under bleach stress, rescuing a wide series of structurally unrelated periplasmic proteins from methionine oxidation. MsrQ provides electrons for reduction to the reductase catalytic subunit MsrP, using the quinone pool of the respiratory chain. The chain is Protein-methionine-sulfoxide reductase heme-binding subunit MsrQ from Xanthomonas campestris pv. campestris (strain B100).